The following is a 653-amino-acid chain: Rab11 family-interacting protein 5 (653 aa).

Residues 5–146 (RGAEPAAGPS…AGRAQHTQWY (142 aa)) enclose the C2 domain. Residues serine 176, serine 283, serine 286, serine 307, serine 357, and serine 367 each carry the phosphoserine modification. Positions 269–300 (GPGAELLTRSPSRSSWLSTEGGRDSAQSPKLF) are disordered. Polar residues predominate over residues 277 to 286 (RSPSRSSWLS). 2 disordered regions span residues 342-402 (HIYN…AVLG) and 415-548 (PGAS…RSSL). Low complexity predominate over residues 357 to 368 (SISGSLPSSGSL). Basic and acidic residues predominate over residues 375-387 (FSEEGPRSTDDTW). Serine 391 and serine 395 each carry phosphoserine. Basic and acidic residues-rich tracts occupy residues 420–430 (PGEEEGARLPE) and 447–460 (VAEKEGARKEERKP). Residues serine 494, serine 538, serine 547, and serine 553 each carry the phosphoserine modification. The 63-residue stretch at 586–648 (KDSAVLDQSA…ETSPTLLQIP (63 aa)) folds into the FIP-RBD domain.

Interacts with RAB11FIP4. Interacts with NAPG. Interacts with RO60. Interacts with RAB11A that has been activated by GTP binding. As to quaternary structure, (Microbial infection) Interacts with Kaposi's sarcoma-associated herpesvirus/HHV-8 protein ORF45; this interaction results in the lysosomal degradation of ORF45 and the inhibition of viral particle release. Post-translationally, phosphorylated on serine and threonine residues. Phosphorylation at Ser-357 is PKA-dependent. As to expression, detected at low levels in heart, brain, placenta, lung, liver, adipocytes, kidney, spleen, skeletal muscle and pancreas.

The protein resides in the cytoplasm. Its subcellular location is the recycling endosome membrane. It is found in the early endosome membrane. The protein localises to the golgi apparatus membrane. It localises to the cytoplasmic vesicle. The protein resides in the secretory vesicle membrane. Its subcellular location is the mitochondrion membrane. Functionally, rab effector involved in protein trafficking from apical recycling endosomes to the apical plasma membrane. Involved in insulin granule exocytosis. May regulate V-ATPase intracellular transport in response to extracellular acidosis. In Homo sapiens (Human), this protein is Rab11 family-interacting protein 5.